Consider the following 352-residue polypeptide: Cell division protein ZipA (352 aa).

Over 1-6 (MKDLQL) the chain is Periplasmic. A helical transmembrane segment spans residues 7–27 (VLFVLGAIAIIAVLVHGFWSI). Over 28–352 (RKQQPKSMKQ…KDYLRRLNAA (325 aa)) the chain is Cytoplasmic. Disordered stretches follow at residues 78-120 (KPVL…HVEP) and 138-160 (PAPT…TSTA). Residues 83–105 (TNLSQKPHSGTTKLTDTPLQDSL) are compositionally biased toward polar residues. The span at 111-120 (HKTEPEHVEP) shows a compositional bias: basic and acidic residues. Residues 141–160 (TASTSMNTPKKIFNPSTSTA) show a composition bias toward polar residues.

It belongs to the ZipA family. In terms of assembly, interacts with FtsZ via their C-terminal domains.

It localises to the cell inner membrane. Functionally, essential cell division protein that stabilizes the FtsZ protofilaments by cross-linking them and that serves as a cytoplasmic membrane anchor for the Z ring. Also required for the recruitment to the septal ring of downstream cell division proteins. The protein is Cell division protein ZipA of Shewanella frigidimarina (strain NCIMB 400).